We begin with the raw amino-acid sequence, 322 residues long: ADP,ATP carrier protein (322 aa).

3 Solcar repeats span residues 25 to 118 (STFF…FKKM), 130 to 222 (KWFA…LKPV), and 230 to 316 (GNFL…VQLL). A run of 5 helical transmembrane segments spans residues 27 to 54 (FFFDFMMGGVSAAVSKTAAAPIERVKLL), 95 to 119 (TANVLRYFPTQALNFAFKDKFKKMF), 128 to 148 (YAKWFAGNLASGGAAGAASLL), 198 to 219 (FGPSVVGIVVYRGLYFGMYDTL), and 233 to 253 (LASFLLGWAVTTGSGVASYPL). ADP is bound by residues Arg100 and Lys112. ADP is bound at residue Arg257. Residues 257-262 (RRRMMM) form an important for transport activity region. The Nucleotide carrier signature motif signature appears at 257 to 262 (RRRMMM). Residues 293–313 (AGANILRGVAGAGVLSIYDQV) form a helical membrane-spanning segment.

The protein belongs to the mitochondrial carrier (TC 2.A.29) family. In terms of assembly, monomer.

It is found in the mitochondrion inner membrane. The enzyme catalyses ADP(in) + ATP(out) = ADP(out) + ATP(in). The matrix-open state (m-state) is inhibited by the membrane-permeable bongkrekic acid (BKA). The cytoplasmic-open state (c-state) is inhibited by the membrane-impermeable toxic inhibitor carboxyatractyloside (CATR). Functionally, ADP:ATP antiporter that mediates import of ADP into the mitochondrial matrix for ATP synthesis, and export of ATP out to fuel the cell. Cycles between the cytoplasmic-open state (c-state) and the matrix-open state (m-state): operates by the alternating access mechanism with a single substrate-binding site intermittently exposed to either the cytosolic (c-state) or matrix (m-state) side of the inner mitochondrial membrane. In Schizosaccharomyces pombe (strain 972 / ATCC 24843) (Fission yeast), this protein is ADP,ATP carrier protein (anc1).